A 276-amino-acid polypeptide reads, in one-letter code: Shikimate dehydrogenase (NADP(+)) (276 aa).

Shikimate contacts are provided by residues 15–17 (SKS) and Thr-62. Lys-66 functions as the Proton acceptor in the catalytic mechanism. Glu-78 serves as a coordination point for NADP(+). Positions 87 and 103 each coordinate shikimate. NADP(+) is bound by residues 128–132 (GAGGA) and Ile-217. Tyr-219 contacts shikimate. Gly-240 is a binding site for NADP(+).

This sequence belongs to the shikimate dehydrogenase family. As to quaternary structure, homodimer.

The catalysed reaction is shikimate + NADP(+) = 3-dehydroshikimate + NADPH + H(+). Its pathway is metabolic intermediate biosynthesis; chorismate biosynthesis; chorismate from D-erythrose 4-phosphate and phosphoenolpyruvate: step 4/7. Its function is as follows. Involved in the biosynthesis of the chorismate, which leads to the biosynthesis of aromatic amino acids. Catalyzes the reversible NADPH linked reduction of 3-dehydroshikimate (DHSA) to yield shikimate (SA). This is Shikimate dehydrogenase (NADP(+)) from Lysinibacillus sphaericus (strain C3-41).